The following is a 239-amino-acid chain: Carboxy-S-adenosyl-L-methionine synthase (239 aa).

S-adenosyl-L-methionine is bound by residues Tyr35, 64–66, 88–89, and Arg195; these read GCS and DN.

This sequence belongs to the class I-like SAM-binding methyltransferase superfamily. Cx-SAM synthase family. Homodimer.

It carries out the reaction prephenate + S-adenosyl-L-methionine = carboxy-S-adenosyl-L-methionine + 3-phenylpyruvate + H2O. Its function is as follows. Catalyzes the conversion of S-adenosyl-L-methionine (SAM) to carboxy-S-adenosyl-L-methionine (Cx-SAM). The polypeptide is Carboxy-S-adenosyl-L-methionine synthase (Helicobacter pylori (strain HPAG1)).